The chain runs to 524 residues: Mitochondrial-processing peptidase subunit alpha (524 aa).

Residues 1–32 (MATAVWAAARLLRGSAALCARPKFGSPAHRRF) constitute a mitochondrion transit peptide. At Lys63 the chain carries N6-succinyllysine.

It belongs to the peptidase M16 family. As to quaternary structure, heterodimer of PMPCA (alpha) and PMPCB (beta) subunits, forming the mitochondrial processing protease (MPP) in which PMPCA is involved in substrate recognition and binding and PMPCB is the catalytic subunit.

Its subcellular location is the mitochondrion matrix. The protein resides in the mitochondrion inner membrane. Its function is as follows. Substrate recognition and binding subunit of the essential mitochondrial processing protease (MPP), which cleaves the mitochondrial sequence off newly imported precursors proteins. The protein is Mitochondrial-processing peptidase subunit alpha (Pmpca) of Rattus norvegicus (Rat).